A 230-amino-acid polypeptide reads, in one-letter code: Orotidine 5'-phosphate decarboxylase (230 aa).

Residues D12, K34, 61–70 (DMKLLDIDNT), T116, R177, Q186, and R207 each bind substrate. Residue K63 is the Proton donor of the active site.

This sequence belongs to the OMP decarboxylase family. Type 1 subfamily. As to quaternary structure, homodimer.

It carries out the reaction orotidine 5'-phosphate + H(+) = UMP + CO2. The protein operates within pyrimidine metabolism; UMP biosynthesis via de novo pathway; UMP from orotate: step 2/2. Its function is as follows. Catalyzes the decarboxylation of orotidine 5'-monophosphate (OMP) to uridine 5'-monophosphate (UMP). In Rhizobium rhizogenes (strain K84 / ATCC BAA-868) (Agrobacterium radiobacter), this protein is Orotidine 5'-phosphate decarboxylase.